Reading from the N-terminus, the 293-residue chain is Elongation factor Ts (293 aa).

The interval 79 to 82 (TDFV) is involved in Mg(2+) ion dislocation from EF-Tu.

The protein belongs to the EF-Ts family.

It localises to the cytoplasm. Its function is as follows. Associates with the EF-Tu.GDP complex and induces the exchange of GDP to GTP. It remains bound to the aminoacyl-tRNA.EF-Tu.GTP complex up to the GTP hydrolysis stage on the ribosome. The chain is Elongation factor Ts from Bacillus velezensis (strain DSM 23117 / BGSC 10A6 / LMG 26770 / FZB42) (Bacillus amyloliquefaciens subsp. plantarum).